Here is a 283-residue protein sequence, read N- to C-terminus: Tryptophan 2,3-dioxygenase (283 aa).

Residues 52-56 (FIIQH), Tyr-114, and Arg-118 each bind substrate. Heme is bound at residue His-241. Thr-255 serves as a coordination point for substrate.

Belongs to the tryptophan 2,3-dioxygenase family. In terms of assembly, homotetramer. It depends on heme as a cofactor.

It catalyses the reaction L-tryptophan + O2 = N-formyl-L-kynurenine. It participates in amino-acid degradation; L-tryptophan degradation via kynurenine pathway; L-kynurenine from L-tryptophan: step 1/2. Its function is as follows. Heme-dependent dioxygenase that catalyzes the oxidative cleavage of the L-tryptophan (L-Trp) pyrrole ring and converts L-tryptophan to N-formyl-L-kynurenine. Catalyzes the oxidative cleavage of the indole moiety. This is Tryptophan 2,3-dioxygenase from Pseudomonas fluorescens (strain ATCC BAA-477 / NRRL B-23932 / Pf-5).